The sequence spans 119 residues: Protein TusC (119 aa).

The protein belongs to the DsrF/TusC family. As to quaternary structure, heterohexamer, formed by a dimer of trimers. The hexameric TusBCD complex contains 2 copies each of TusB, TusC and TusD. The TusBCD complex interacts with TusE.

Its subcellular location is the cytoplasm. Functionally, part of a sulfur-relay system required for 2-thiolation of 5-methylaminomethyl-2-thiouridine (mnm(5)s(2)U) at tRNA wobble positions. The protein is Protein TusC of Shigella flexneri serotype 5b (strain 8401).